Here is a 188-residue protein sequence, read N- to C-terminus: Large ribosomal subunit protein uL6 (188 aa).

Belongs to the universal ribosomal protein uL6 family. Part of the 50S ribosomal subunit.

Its function is as follows. This protein binds to the 23S rRNA, and is important in its secondary structure. It is located near the subunit interface in the base of the L7/L12 stalk, and near the tRNA binding site of the peptidyltransferase center. The protein is Large ribosomal subunit protein uL6 of Myxococcus xanthus (strain DK1622).